The following is a 36-amino-acid chain: MTASYSPSISVPLVGLVFPAITMVLSFIYIERDEIV.

Residues 9–29 (ISVPLVGLVFPAITMVLSFIY) traverse the membrane as a helical segment.

Belongs to the PsaI family.

The protein localises to the plastid. Its subcellular location is the chloroplast thylakoid membrane. Functionally, may help in the organization of the PsaL subunit. This chain is Photosystem I reaction center subunit VIII, found in Huperzia lucidula (Shining clubmoss).